Reading from the N-terminus, the 169-residue chain is Ribosome maturation factor RimM (169 aa).

A PRC barrel domain is found at 97-169 (EDEYYWTDLV…IITADWGLDY (73 aa)).

This sequence belongs to the RimM family. As to quaternary structure, binds ribosomal protein uS19.

It localises to the cytoplasm. An accessory protein needed during the final step in the assembly of 30S ribosomal subunit, possibly for assembly of the head region. Essential for efficient processing of 16S rRNA. May be needed both before and after RbfA during the maturation of 16S rRNA. It has affinity for free ribosomal 30S subunits but not for 70S ribosomes. The chain is Ribosome maturation factor RimM from Neisseria meningitidis serogroup C / serotype 2a (strain ATCC 700532 / DSM 15464 / FAM18).